The primary structure comprises 57 residues: Large ribosomal subunit protein bL32 (57 aa).

Positions Met-1–Gln-19 are enriched in basic residues. The segment at Met-1–Trp-20 is disordered.

It belongs to the bacterial ribosomal protein bL32 family.

This Mycolicibacterium smegmatis (strain ATCC 700084 / mc(2)155) (Mycobacterium smegmatis) protein is Large ribosomal subunit protein bL32.